The following is a 224-amino-acid chain: MNTLNDEAVVERIDKSLARSRVYSLLAIGLGFPDVESHAGFSDGRLMIEMHQALEVCMPGLAEYFSEQIAPRLKLTCSFEDFEALFLTAFETNMPVPSAALYEGVHVQQSNRPGLILELKGFYRNFGLTMDAQGNELEDTLTAELEFMHFLTAKQAQAEMESLSPNAYQRAQRDFLERHLVVWLPLVRAEVNAKVATQFFVALIDLAERFVDAHLEEMLFELNS.

The protein belongs to the type II DMSO reductase enzyme chaperone family.

Its subcellular location is the cytoplasm. Functionally, may function as a system-specific molybdenum chaperone protein essential for the assembly of the perchlorate reductase PcrAB complex prior to its periplasmic translocation via the Tat pathway. The chain is Perchlorate reductase assembly chaperone protein (pcrD) from Dechloromonas aromatica (strain RCB).